We begin with the raw amino-acid sequence, 974 residues long: Collagen alpha-1(I) chain (974 aa).

The segment covering 1-14 (GISVPGPMGPSGPR) has biased composition (low complexity). The interval 1–974 (GISVPGPMGP…PGPPGPPGPP (974 aa)) is disordered. 4-hydroxyproline is present on residues proline 17, proline 20, proline 23, proline 32, proline 35, proline 38, proline 53, proline 68, proline 75, and proline 81. The segment covering 25 to 44 (PQGFQGPPGEPGEPGASGPM) has biased composition (low complexity). Over residues 56–73 (NGDDGEAGKPGRPGERRG) the composition is skewed to basic and acidic residues. Lysine 84 is modified (5-hydroxylysine; alternate). Lysine 84 carries O-linked (Gal...) hydroxylysine; alternate glycosylation. The residue at position 90 (serine 90) is a Phosphoserine. Residues 98-114 (DAGPAGPKGEPGSPGEN) are compositionally biased toward low complexity. 4-hydroxyproline occurs at positions 108, 111, 117, 126, 132, 153, 162, 165, 192, 195, 207, 213, 222, 228, 231, and 245. Low complexity predominate over residues 132–150 (PGASGPAGARGNDGATGAA). Pro residues predominate over residues 152–164 (PPGPTGPAGPPGF). The segment covering 198 to 228 (AGAAGPAGNPGADGQPGAKGANGAPGIAGAP) has biased composition (low complexity). The residue at position 248 (lysine 248) is a 5-hydroxylysine. 4-hydroxyproline is present on residues proline 254, proline 257, proline 269, proline 278, proline 293, proline 299, proline 308, and proline 314. Residues 303–312 (GERGGPGSRG) are compositionally biased toward gly residues. Residue lysine 323 is modified to 5-hydroxylysine. Proline 328, proline 337, proline 343, proline 349, proline 358, proline 361, proline 370, proline 379, proline 385, proline 397, proline 406, proline 415, proline 418, proline 436, proline 454, proline 460, proline 466, proline 472, proline 484, proline 493, proline 505, proline 520, proline 527, and proline 536 each carry 4-hydroxyproline. The span at 352 to 378 (KGLTGSPGSPGPDGKTGPPGPAGQDGR) shows a compositional bias: low complexity. Residues 387–406 (ARGQAGVMGFPGPKGAAGEP) show a composition bias toward low complexity. Over residues 504-517 (APGNDGAKGDAGAP) the composition is skewed to low complexity. Lysine 548 carries the 5-hydroxylysine modification. 4-hydroxyproline occurs at positions 554, 569, and 575. Low complexity predominate over residues 581–595 (SGPSGPAGPTGARGA). Phosphoserine is present on serine 584. 4-hydroxyproline is present on residues proline 596, proline 602, proline 605, proline 614, proline 620, proline 638, proline 647, and proline 656. The segment covering 608-635 (AGFAGPPGADGQPGAKGEPGDAGAKGDA) has biased composition (low complexity). The span at 637–649 (PPGPAGPTGPPGP) shows a compositional bias: pro residues. Lysine 659 carries the post-translational modification 5-hydroxylysine. Positions 664–680 (SAGPPGATGFPGAAGRV) are enriched in low complexity. Residues proline 668 and proline 674 each carry the 4-hydroxyproline modification. Residue proline 682 is modified to 3-hydroxyproline. A 4-hydroxyproline mark is found at proline 683, proline 692, proline 695, proline 716, proline 725, proline 733, proline 742, proline 760, proline 769, proline 772, proline 778, proline 793, proline 799, proline 805, proline 814, and proline 820. Low complexity predominate over residues 709 to 718 (ETGPAGRPGE). Positions 730–742 (KGSPGADGPAGAP) are enriched in low complexity. Pro residues predominate over residues 792-802 (PPGPVGPPGLA). Residues 804 to 826 (PPGESGREGSPGAEGSPGRDGSP) are compositionally biased toward low complexity. Positions 828–844 (PKGPPGAPGAPGAPGPV) are enriched in pro residues. Lysine 829 carries the 5-hydroxylysine modification. 4-hydroxyproline occurs at positions 832, 835, and 838. The span at 865-879 (AGPAGARGPAGPQGP) shows a compositional bias: low complexity. The segment covering 880–894 (RGDKGETGEQGDRRG) has biased composition (basic and acidic residues). Lysine 883 carries the 5-hydroxylysine modification. 4-hydroxyproline occurs at positions 905, 908, 926, and 941. Over residues 908 to 941 (PGEQGPSGASGPAGPRGPPGSAGSPGKDGLNGLP) the composition is skewed to low complexity. Proline 946 carries the post-translational modification 3-hydroxyproline. Proline 947 carries the 4-hydroxyproline modification. Over residues 959–974 (VGPPGPPGPPGPPGPP) the composition is skewed to pro residues. The residue at position 961 (proline 961) is a 3-hydroxyproline. Proline 962 is modified (4-hydroxyproline). Proline 964 is modified (3-hydroxyproline). 4-hydroxyproline is present on proline 965. Proline 967 bears the 3-hydroxyproline mark. A 4-hydroxyproline mark is found at proline 968, proline 971, and proline 974.

It belongs to the fibrillar collagen family. In terms of assembly, trimers of one alpha 2(I) and two alpha 1(I) chains. In terms of processing, contains mostly 4-hydroxyproline. Proline residues at the third position of the tripeptide repeating unit (G-X-Y) are hydroxylated in some or all of the chains. Post-translationally, contains 3-hydroxyproline at a few sites. This modification occurs on the first proline residue in the sequence motif Gly-Pro-Hyp, where Hyp is 4-hydroxyproline. Lysine residues at the third position of the tripeptide repeating unit (G-X-Y) are 5-hydroxylated in some or all of the chains. In terms of processing, O-glycosylated on hydroxylated lysine residues. The O-linked glycan consists of a Glc-Gal disaccharide. Expressed in bones.

It is found in the secreted. Its subcellular location is the extracellular space. The protein resides in the extracellular matrix. In terms of biological role, type I collagen is a member of group I collagen (fibrillar forming collagen). The sequence is that of Collagen alpha-1(I) chain from Scelidodon sp. (strain SLP-2019) (South American ground sloth).